Here is a 130-residue protein sequence, read N- to C-terminus: DNA-directed RNA polymerase subunit omega (130 aa).

Positions 110 to 130 (EELLKGLEGLAPPEEQPEEDE) are disordered.

This sequence belongs to the RNA polymerase subunit omega family. In terms of assembly, the RNAP catalytic core consists of 2 alpha, 1 beta, 1 beta' and 1 omega subunit. When a sigma factor is associated with the core the holoenzyme is formed, which can initiate transcription.

The enzyme catalyses RNA(n) + a ribonucleoside 5'-triphosphate = RNA(n+1) + diphosphate. In terms of biological role, promotes RNA polymerase assembly. Latches the N- and C-terminal regions of the beta' subunit thereby facilitating its interaction with the beta and alpha subunits. In Bradyrhizobium sp. (strain BTAi1 / ATCC BAA-1182), this protein is DNA-directed RNA polymerase subunit omega.